Reading from the N-terminus, the 440-residue chain is GTPase Der (440 aa).

EngA-type G domains follow at residues 4-168 (PIVA…NPED) and 177-352 (IKVA…NQNA). GTP contacts are provided by residues 10–17 (GRPNVGKS), 57–61 (DTGGI), 120–123 (NKVD), 183–190 (GKPNVGKS), 230–234 (DTAGI), and 295–298 (NKWD). Positions 353 to 437 (MRIPTGALNE…PIRFILREKT (85 aa)) constitute a KH-like domain.

It belongs to the TRAFAC class TrmE-Era-EngA-EngB-Septin-like GTPase superfamily. EngA (Der) GTPase family. In terms of assembly, associates with the 50S ribosomal subunit.

In terms of biological role, GTPase that plays an essential role in the late steps of ribosome biogenesis. The protein is GTPase Der of Alkaliphilus oremlandii (strain OhILAs) (Clostridium oremlandii (strain OhILAs)).